The following is a 197-amino-acid chain: Gastrula zinc finger protein XlCGF17.1 (197 aa).

C2H2-type zinc fingers lie at residues 6 to 28 (ISCS…QMTH), 34 to 56 (YSCS…QKIH), 62 to 84 (FSCS…HRTH), 90 to 112 (FFCS…RRTH), 118 to 140 (FSCS…YRTH), 146 to 169 (FSCS…RRSH), and 175 to 197 (FSCS…LRTH).

This sequence belongs to the krueppel C2H2-type zinc-finger protein family.

The protein localises to the nucleus. Its function is as follows. May be involved in transcriptional regulation. This Xenopus laevis (African clawed frog) protein is Gastrula zinc finger protein XlCGF17.1.